Consider the following 290-residue polypeptide: ATP synthase gamma chain (290 aa).

The protein belongs to the ATPase gamma chain family. In terms of assembly, F-type ATPases have 2 components, CF(1) - the catalytic core - and CF(0) - the membrane proton channel. CF(1) has five subunits: alpha(3), beta(3), gamma(1), delta(1), epsilon(1). CF(0) has three main subunits: a, b and c.

The protein localises to the cell inner membrane. Produces ATP from ADP in the presence of a proton gradient across the membrane. The gamma chain is believed to be important in regulating ATPase activity and the flow of protons through the CF(0) complex. This is ATP synthase gamma chain from Paracoccus denitrificans (strain Pd 1222).